We begin with the raw amino-acid sequence, 387 residues long: Phosphoglycerate kinase (387 aa).

Residues 21-23, arginine 36, and 59-62 each bind substrate; these read DLN and HLGR. Lysine 84 bears the N6-acetyllysine mark. Substrate contacts are provided by arginine 113 and arginine 146. ATP is bound by residues lysine 197, glutamate 314, and 340–343; that span reads GGDT.

This sequence belongs to the phosphoglycerate kinase family. In terms of assembly, monomer.

Its subcellular location is the cytoplasm. It catalyses the reaction (2R)-3-phosphoglycerate + ATP = (2R)-3-phospho-glyceroyl phosphate + ADP. Its pathway is carbohydrate degradation; glycolysis; pyruvate from D-glyceraldehyde 3-phosphate: step 2/5. This is Phosphoglycerate kinase from Escherichia coli O139:H28 (strain E24377A / ETEC).